Here is a 347-residue protein sequence, read N- to C-terminus: Probable E3 ubiquitin-protein ligase DTX3 (347 aa).

The interval 111-157 (GGEHPELHRPGPPPLRAAPLLPPGARGLPPPPPPLPPPLPPRLREDA) is disordered. Positions 120–151 (PGPPPLRAAPLLPPGARGLPPPPPPLPPPLPP) are enriched in pro residues. The segment at 164 to 205 (CPICLGEIQNAKTLEKCRHSFCEGCITRALQVKKACPMCGRF) adopts an RING-type zinc-finger fold.

The protein belongs to the Deltex family. As to quaternary structure, homodimer. May form a heterodimer with other members of the Deltex family. Interacts with NOTCH1. As to expression, strongly expressed in testis and brain. Weakly expressed in kidney.

Its subcellular location is the cytoplasm. It catalyses the reaction S-ubiquitinyl-[E2 ubiquitin-conjugating enzyme]-L-cysteine + [acceptor protein]-L-lysine = [E2 ubiquitin-conjugating enzyme]-L-cysteine + N(6)-ubiquitinyl-[acceptor protein]-L-lysine.. It functions in the pathway protein modification; protein ubiquitination. Regulator of Notch signaling, a signaling pathway involved in cell-cell communications that regulates a broad spectrum of cell-fate determinations. Probably acts both as a positive and negative regulator of Notch, depending on the developmental and cell context. Functions as a ubiquitin ligase protein in vitro, suggesting that it may regulate the Notch pathway via some ubiquitin ligase activity. The polypeptide is Probable E3 ubiquitin-protein ligase DTX3 (Dtx3) (Mus musculus (Mouse)).